The sequence spans 124 residues: Mitochondrial zinc maintenance protein 1, mitochondrial (124 aa).

Belongs to the complex I LYR family. MZM1 subfamily. As to quaternary structure, interacts with RIP1.

The protein localises to the mitochondrion matrix. Its function is as follows. Assembly factor required for Rieske Fe-S protein RIP1 incorporation into the cytochrome b-c1 (CIII) complex. Functions as a chaperone, binding to this subunit within the mitochondrial matrix and stabilizing it prior to its translocation and insertion into the late CIII dimeric intermediate within the mitochondrial inner membrane. Modulates the mitochondrial matrix zinc pool. This Paracoccidioides lutzii (strain ATCC MYA-826 / Pb01) (Paracoccidioides brasiliensis) protein is Mitochondrial zinc maintenance protein 1, mitochondrial (MZM1).